Consider the following 514-residue polypeptide: MALSELALVRWLQESRRSRKLILFIVFLALLLDNMLLTVVVPIIPSYLYSIKHEKNATEIQTARPVHTASISDSFQSIFSYYDNSTMVTGNATRDLTLHQTATQHMVTNASAVPSDCPSEDKDLLNENVQVGLLFASKATVQLITNPFIGLLTNRIGYPIPIFAGFCIMFVSTIMFAFSSSYAFLLIARSLQGIGSSCSSVAGMGMLASVYTDDEERGNVMGIALGGLAMGVLVGPPFGSVLYEFVGKTAPFLVLAALVLLDGAIQLFVLQPSRVQPESQKGTPLTTLLKDPYILIAAGSICFANMGIAMLEPALPIWMMETMCSRKWQLGVAFLPASISYLIGTNIFGILAHKMGRWLCALLGMIIVGVSILCIPFAKNIYGLIAPNFGVGFAIGMVDSSMMPIMGYLVDLRHVSVYGSVYAIADVAFCMGYAIGPSAGGAIAKAIGFPWLMTIIGIIDILFAPLCFFLRSPPAKEEKMAILMDHNCPIKTKMYTQNNIQSYPIGEDEESESD.

The Cytoplasmic portion of the chain corresponds to 1 to 20 (MALSELALVRWLQESRRSRK). Residues 21–41 (LILFIVFLALLLDNMLLTVVV) traverse the membrane as a helical segment. The Lumenal, vesicle portion of the chain corresponds to 42–129 (PIIPSYLYSI…EDKDLLNENV (88 aa)). 2 N-linked (GlcNAc...) asparagine glycosylation sites follow: Asn-84 and Asn-91. A disulfide bond links Cys-117 and Cys-324. Residues 130 to 150 (QVGLLFASKATVQLITNPFIG) form a helical membrane-spanning segment. At 151–159 (LLTNRIGYP) the chain is on the cytoplasmic side. The helical transmembrane segment at 160–180 (IPIFAGFCIMFVSTIMFAFSS) threads the bilayer. Residues 181–189 (SYAFLLIAR) are Lumenal, vesicle-facing. The helical transmembrane segment at 190–210 (SLQGIGSSCSSVAGMGMLASV) threads the bilayer. Residues 211 to 219 (YTDDEERGN) are Cytoplasmic-facing. A helical transmembrane segment spans residues 220 to 242 (VMGIALGGLAMGVLVGPPFGSVL). Serotonin-binding residues include Leu-228 and Val-232. At 243–248 (YEFVGK) the chain is on the lumenal, vesicle side. Residues 249 to 271 (TAPFLVLAALVLLDGAIQLFVLQ) traverse the membrane as a helical segment. Residues 272–291 (PSRVQPESQKGTPLTTLLKD) are Cytoplasmic-facing. Residues 292 to 311 (PYILIAAGSICFANMGIAML) traverse the membrane as a helical segment. Residues Asn-305, Ile-308, Glu-312, Phe-334, and Tyr-341 each coordinate serotonin. At 312–328 (EPALPIWMMETMCSRKW) the chain is on the lumenal, vesicle side. Residues 329 to 352 (QLGVAFLPASISYLIGTNIFGILA) form a helical membrane-spanning segment. The Cytoplasmic segment spans residues 353–357 (HKMGR). Residues 358 to 378 (WLCALLGMIIVGVSILCIPFA) traverse the membrane as a helical segment. The Lumenal, vesicle segment spans residues 379-389 (KNIYGLIAPNF). A helical transmembrane segment spans residues 390-410 (GVGFAIGMVDSSMMPIMGYLV). A serotonin-binding site is contributed by Asp-399. Residues 411 to 414 (DLRH) are Cytoplasmic-facing. A helical transmembrane segment spans residues 415–435 (VSVYGSVYAIADVAFCMGYAI). Tyr-433 is a serotonin binding site. Residues 436–440 (GPSAG) are Lumenal, vesicle-facing. Residues 441–462 (GAIAKAIGFPWLMTIIGIIDIL) traverse the membrane as a helical segment. Residues 463–514 (FAPLCFFLRSPPAKEEKMAILMDHNCPIKTKMYTQNNIQSYPIGEDEESESD) are Cytoplasmic-facing. Phosphoserine is present on residues Ser-511 and Ser-513.

Belongs to the major facilitator superfamily. Vesicular transporter family. As to quaternary structure, interacts with SLC6A3. In terms of tissue distribution, expressed in neuronal and neuroendocrine tissues. Detected in central and peripheral nervous system in particular in axonal and dendritic processes in dopaminergic cells of substantia nigra, histaminergic neuronal cell bodies of substantia nigra and tuberomammillary nucleus, in ganglion cells of sympathetic glia and in peripheral sympathetic nerve terminals in stomach and duodenum (at protein level). Highly expressed in chromaffin cells of the adrenal medulla and histamine-storing enterochromaffin-like cells of oxyntic mucosa (at protein level).

It localises to the cytoplasmic vesicle. The protein localises to the secretory vesicle. Its subcellular location is the synaptic vesicle membrane. The protein resides in the secretory vesicle membrane. It is found in the cell projection. It localises to the axon. The protein localises to the dendrite. The enzyme catalyses serotonin(in) + 2 H(+)(out) = serotonin(out) + 2 H(+)(in). The catalysed reaction is dopamine(in) + 2 H(+)(out) = dopamine(out) + 2 H(+)(in). It catalyses the reaction histamine(in) + 2 H(+)(out) = histamine(out) + 2 H(+)(in). With respect to regulation, strongly inhibited by reserpine and tetrabenazine. Also inhibited to a lesser extent by ketanserin and fenfluramine. Reserpine and ketanserin inhibit by blocking the substrate-binding pocket. Tetrabenazine traps SLC18A2/VMAT2 in an occluded conformation and its inhibition is specific to SLC18A2/VMAT2 but not SLC18A1/VMAT1. Functionally, electrogenic antiporter that exchanges one cationic monoamine with two intravesicular protons across the membrane of secretory and synaptic vesicles. Uses the electrochemical proton gradient established by the V-type proton-pump ATPase to accumulate high concentrations of monoamines inside the vesicles prior to their release via exocytosis. Transports a variety of catecholamines such as dopamine, adrenaline and noradrenaline, histamine, and indolamines such as serotonin. Regulates the transvesicular monoaminergic gradient that determines the quantal size. Mediates somatodendritic dopamine release in hippocampal neurons, likely as part of a regulated secretory pathway that integrates retrograde synaptic signals. Acts as a primary transporter for striatal dopamine loading ensuring impulse-dependent release of dopamine at the synaptic cleft. Responsible for histamine and serotonin storage and subsequent corelease from mast cell granules. The chain is Synaptic vesicular amine transporter (SLC18A2) from Homo sapiens (Human).